Here is a 491-residue protein sequence, read N- to C-terminus: 2,3-bisphosphoglycerate-independent phosphoglycerate mutase (491 aa).

Residues D11 and S61 each contribute to the Mn(2+) site. The active-site Phosphoserine intermediate is the S61. Residues H118, 147-148 (RD), R177, R183, 248-251 (RSDR), and K320 contribute to the substrate site. Mn(2+)-binding residues include D386, H390, D427, H428, and H445.

This sequence belongs to the BPG-independent phosphoglycerate mutase family. As to quaternary structure, monomer. The cofactor is Mn(2+).

The catalysed reaction is (2R)-2-phosphoglycerate = (2R)-3-phosphoglycerate. Its pathway is carbohydrate degradation; glycolysis; pyruvate from D-glyceraldehyde 3-phosphate: step 3/5. In terms of biological role, catalyzes the interconversion of 2-phosphoglycerate and 3-phosphoglycerate. This is 2,3-bisphosphoglycerate-independent phosphoglycerate mutase from Sulfurimonas denitrificans (strain ATCC 33889 / DSM 1251) (Thiomicrospira denitrificans (strain ATCC 33889 / DSM 1251)).